We begin with the raw amino-acid sequence, 298 residues long: Syntaxin-125 (298 aa).

M1 carries the N-acetylmethionine modification. The Cytoplasmic portion of the chain corresponds to 1–274; that stretch reads MNDLFSNSFK…KSSRKWTCYA (274 aa). Residues 25-155 adopt a coiled-coil conformation; sequence TMNLDKFFED…NEYKETVERR (131 aa). A t-SNARE coiled-coil homology domain is found at 198 to 260; the sequence is ISEIQERHDA…RRGTDQLQDA (63 aa). A helical; Anchor for type IV membrane protein transmembrane segment spans residues 275-295; it reads IILFIVIFILLLIPLLPHIML. The Vesicular segment spans residues 296 to 298; it reads MLK.

The protein belongs to the syntaxin family. In terms of assembly, part of the t-SNARE complex.

It is found in the membrane. Functionally, vesicle trafficking protein that functions in the secretory pathway. This is Syntaxin-125 (SYP125) from Arabidopsis thaliana (Mouse-ear cress).